The chain runs to 653 residues: Transmembrane and coiled-coil domains protein 1 (653 aa).

Met-1 bears the N-acetylmethionine mark. Disordered regions lie at residues 1–35 (MEPS…QKLS), 58–78 (HQRR…ADPE), 112–165 (PPKM…APTS), and 204–227 (TSSA…TPDP). The Cytoplasmic segment spans residues 1 to 591 (MEPSGSEQLF…ARNLLGKLIN (591 aa)). Positions 20 to 34 (QDAEARKQTESEQKL) are enriched in basic and acidic residues. Residues 64 to 74 (SVSPHDVQQIQ) are compositionally biased toward polar residues. Positions 113 to 125 (PKMKRGTSLHSRR) are enriched in basic residues. Residues 135-144 (PQINRKSGQE) are compositionally biased toward polar residues. Positions 153–165 (RPRSSSTTDAPTS) are enriched in low complexity. Positions 204–218 (TSSAVASSTDGSIHT) are enriched in polar residues. The stretch at 228-313 (QRTKAAIAHL…RKLREVEQNG (86 aa)) forms a coiled coil. Phosphoserine occurs at positions 382 and 414. The tract at residues 415-437 (PKYGSEEDCSSATSGSVGANSTT) is disordered. The span at 424–437 (SSATSGSVGANSTT) shows a compositional bias: polar residues. Residues 458 to 576 (GFDALLHEIQ…QQQQVVQLEG (119 aa)) adopt a coiled-coil conformation. Helical transmembrane passes span 592-612 (ILLA…NCVV) and 625-645 (LFLV…FSYV). Residues 646–653 (ERFFSSPR) are Cytoplasmic-facing.

This sequence belongs to the TEX28 family. May form homodimers and heterodimers with TMCC2 or TMCC3 via the coiled-coil domains. Interacts with ribosomal proteins RPL4 and RPS6.

The protein resides in the endoplasmic reticulum membrane. In terms of biological role, endoplasmic reticulum membrane protein that promotes endoplasmic reticulum-associated endosome fission. Localizes to contact sites between the endoplasmic reticulum and endosomes and acts by promoting recruitment of the endoplasmic reticulum to endosome tubules for fission. Endosome membrane fission of early and late endosomes is essential to separate regions destined for lysosomal degradation from carriers to be recycled to the plasma membrane. This Homo sapiens (Human) protein is Transmembrane and coiled-coil domains protein 1.